We begin with the raw amino-acid sequence, 447 residues long: UDP-glycosyltransferase 76E5 (447 aa).

UDP-alpha-D-glucose-binding positions include serine 272, 324 to 326 (APQ), 341 to 349 (HCGWNSTLE), and 363 to 366 (NGEQ).

This sequence belongs to the UDP-glycosyltransferase family.

This is UDP-glycosyltransferase 76E5 (UGT76E5) from Arabidopsis thaliana (Mouse-ear cress).